We begin with the raw amino-acid sequence, 474 residues long: Chromosomal replication initiator protein DnaA (474 aa).

The segment at Met1–Ser91 is domain I, interacts with DnaA modulators. The segment at Ala89–Leu138 is disordered. The domain II stretch occupies residues Ser91 to Ser136. Residues Ser96–Ala113 show a composition bias toward low complexity. The domain III, AAA+ region stretch occupies residues Asn137–Val354. Gly182, Gly184, Lys185, and Thr186 together coordinate ATP. Residues Arg355–Ser474 form a domain IV, binds dsDNA region.

It belongs to the DnaA family. Oligomerizes as a right-handed, spiral filament on DNA at oriC.

Its subcellular location is the cytoplasm. In terms of biological role, plays an essential role in the initiation and regulation of chromosomal replication. ATP-DnaA binds to the origin of replication (oriC) to initiate formation of the DNA replication initiation complex once per cell cycle. Binds the DnaA box (a 9 base pair repeat at the origin) and separates the double-stranded (ds)DNA. Forms a right-handed helical filament on oriC DNA; dsDNA binds to the exterior of the filament while single-stranded (ss)DNA is stabiized in the filament's interior. The ATP-DnaA-oriC complex binds and stabilizes one strand of the AT-rich DNA unwinding element (DUE), permitting loading of DNA polymerase. After initiation quickly degrades to an ADP-DnaA complex that is not apt for DNA replication. Binds acidic phospholipids. The sequence is that of Chromosomal replication initiator protein DnaA from Alcanivorax borkumensis (strain ATCC 700651 / DSM 11573 / NCIMB 13689 / SK2).